The following is a 426-amino-acid chain: Gamma-glutamyl phosphate reductase (426 aa).

Belongs to the gamma-glutamyl phosphate reductase family.

Its subcellular location is the cytoplasm. The enzyme catalyses L-glutamate 5-semialdehyde + phosphate + NADP(+) = L-glutamyl 5-phosphate + NADPH + H(+). Its pathway is amino-acid biosynthesis; L-proline biosynthesis; L-glutamate 5-semialdehyde from L-glutamate: step 2/2. Functionally, catalyzes the NADPH-dependent reduction of L-glutamate 5-phosphate into L-glutamate 5-semialdehyde and phosphate. The product spontaneously undergoes cyclization to form 1-pyrroline-5-carboxylate. In Cupriavidus necator (strain ATCC 17699 / DSM 428 / KCTC 22496 / NCIMB 10442 / H16 / Stanier 337) (Ralstonia eutropha), this protein is Gamma-glutamyl phosphate reductase.